The primary structure comprises 78 residues: High temperature lethal protein 1 (78 aa).

The residue at position 2 (S2) is an N-acetylserine.

Interacts directly with RSC8. Component of the two forms of the RSC complex composed of at least either RSC1 or RSC2, and ARP7, ARP9, LDB7, NPL6, RSC3, RSC30, RSC4, RSC58, RSC6, RSC8, RSC9, SFH1, STH1, HTL1 and probably RTT102. The complexes interact with histone and histone variant components of centromeric chromatin. Component of a fungal-specific module (HTL1-LDB7-NPL6-RSC3-RSC30) within the RSC complex.

The protein localises to the nucleus. Required for cell cycle progression through G2/M transition at temperatures higher than 33 degrees Celsius. Component of the chromatin structure-remodeling complex (RSC), which is involved in transcription regulation and nucleosome positioning. RSC is responsible for the transfer of a histone octamer from a nucleosome core particle to naked DNA. The reaction requires ATP and involves an activated RSC-nucleosome intermediate. Remodeling reaction also involves DNA translocation, DNA twist and conformational change. As a reconfigurer of centromeric and flanking nucleosomes, RSC complex is required both for proper kinetochore function in chromosome segregation and, via a PKC1-dependent signaling pathway, for organization of the cellular cytoskeleton. When associated with the RSC complex, may act coordinately with PKC1 to regulate G2/M transition. Together with LDB7, NPL6, RSC3, RSC30 components, defines a fungal-specific module within the RSC complex that plays a role in many cellular functions including the maintenance of cell wall integrity. The chain is High temperature lethal protein 1 (HTL1) from Saccharomyces cerevisiae (strain ATCC 204508 / S288c) (Baker's yeast).